The following is a 572-amino-acid chain: Arginine--tRNA ligase (572 aa).

The 'HIGH' region motif lies at 122–132; it reads PNLAKEMHVGH.

This sequence belongs to the class-I aminoacyl-tRNA synthetase family. As to quaternary structure, monomer.

The protein localises to the cytoplasm. It carries out the reaction tRNA(Arg) + L-arginine + ATP = L-arginyl-tRNA(Arg) + AMP + diphosphate. In Neisseria meningitidis serogroup A / serotype 4A (strain DSM 15465 / Z2491), this protein is Arginine--tRNA ligase.